A 519-amino-acid polypeptide reads, in one-letter code: Acetylcholine receptor subunit gamma (519 aa).

An N-terminal signal peptide occupies residues 1–22 (MQGGQRPHLLLLLLAVCLGAQS). Topologically, residues 23–240 (RNQEERLLAD…VVFYLLIQRK (218 aa)) are extracellular. 2 N-linked (GlcNAc...) asparagine glycosylation sites follow: Asn-52 and Asn-163. Cys-150 and Cys-164 are oxidised to a cystine. The next 3 membrane-spanning stretches (helical) occupy residues 241–265 (PLFY…IYFL), 274–292 (CTVA…FLVA), and 308–329 (YLTF…VLNV). At 330–476 (SLRSPHTHSM…WLLVGRVLDR (147 aa)) the chain is on the cytoplasmic side. A helical transmembrane segment spans residues 477–497 (VCFLAMLSLFICGTAGIFLMA).

It belongs to the ligand-gated ion channel (TC 1.A.9) family. Acetylcholine receptor (TC 1.A.9.1) subfamily. Gamma/CHRNG sub-subfamily. In terms of assembly, pentamer of two alpha chains, and one each of the beta, delta, and gamma (in immature muscle) or epsilon (in mature muscle) chains. In terms of tissue distribution, at least in myotubes of skeletal muscle.

It localises to the postsynaptic cell membrane. The protein localises to the cell membrane. The enzyme catalyses K(+)(in) = K(+)(out). It catalyses the reaction Na(+)(in) = Na(+)(out). After binding acetylcholine, the AChR responds by an extensive change in conformation that affects all subunits and leads to opening of an ion-conducting channel across the plasma membrane. This Mus musculus (Mouse) protein is Acetylcholine receptor subunit gamma (Chrng).